A 549-amino-acid polypeptide reads, in one-letter code: Myotubularin-related protein 9 (549 aa).

At methionine 1 the chain carries N-acetylmethionine. One can recognise a GRAM domain in the interval 4-99; that stretch reads AELIKTPRVD…LNIASSIEAL (96 aa). The 376-residue stretch at 123–498 folds into the Myotubularin phosphatase domain; sequence GWHSFLPEQE…QSLQLWEGIF (376 aa). Residues 508–542 adopt a coiled-coil conformation; it reads LDEAYEEMVNIIEYNKELQAKVNLLRRQLAELETE. The residue at position 548 (serine 548) is a Phosphoserine.

The protein belongs to the protein-tyrosine phosphatase family. Non-receptor class myotubularin subfamily. Homodimer. Heterodimer (via C-terminus) with lipid phosphatase MTMR6 (via C-terminus). Heterodimer (via coiled coil domain) with lipid phosphatase MTMR7 (via C-terminus). Heterodimer with lipid phosphatase MTMR8.

The protein localises to the cytoplasm. The protein resides in the cell projection. Its subcellular location is the ruffle membrane. It localises to the perinuclear region. It is found in the endoplasmic reticulum. In terms of biological role, acts as an adapter for myotubularin-related phosphatases. Increases lipid phosphatase MTMR6 catalytic activity, specifically towards phosphatidylinositol 3,5-bisphosphate, and MTMR6 binding affinity for phosphorylated phosphatidylinositols. Positively regulates lipid phosphatase MTMR7 catalytic activity. Increases MTMR8 catalytic activity towards phosphatidylinositol 3-phosphate. The formation of the MTMR6-MTMR9 complex, stabilizes both MTMR6 and MTMR9 protein levels. Stabilizes MTMR8 protein levels. Plays a role in the late stages of macropinocytosis possibly by regulating MTMR6-mediated dephosphorylation of phosphatidylinositol 3-phosphate in membrane ruffles. Negatively regulates autophagy, in part via its association with MTMR8. Negatively regulates DNA damage-induced apoptosis, in part via its association with MTMR6. Does not bind mono-, di- and tri-phosphorylated phosphatidylinositols, phosphatidic acid and phosphatidylserine. The protein is Myotubularin-related protein 9 (MTMR9) of Bos taurus (Bovine).